The chain runs to 805 residues: H(+)/Cl(-) exchange transporter 7 (805 aa).

The segment at 1-49 (MANVSKKVSWSGRDRDDEEAAPLLRRTARPGGGTPLLNGAGPGAARQSP) is disordered. Residues 1-126 (MANVSKKVSW…TAFRTVEIKR (126 aa)) lie on the Cytoplasmic side of the membrane. Phosphoserine is present on residues Ser-9 and Ser-60. 2 consecutive transmembrane segments (helical) span residues 127 to 159 (WVICALIGILTGLVACFIDIVVENLAGLKYRVI) and 174 to 197 (FSLLLWATLNAAFVLVGSVIVAFI). A Selectivity filter part_1 motif is present at residues 203-207 (GSGIP). Residue Ser-204 coordinates chloride. The segment at residues 206–213 (IPQIKCFL) is an intramembrane region (helical). 2 helical membrane passes run 223–241 (RLKTLVIKVSGVILSVVGG) and 247–264 (EGPMIHSGSVIAAGISQG). The Selectivity filter part_2 motif lies at 245–249 (GKEGP). 2 intramembrane regions (helical) span residues 288–300 (FVSAGAAAGVSAA) and 304–312 (PVGGVLFSL). 5 consecutive transmembrane segments (helical) span residues 322 to 341 (FLTWRIFFASMISTFTLNFV), 375 to 405 (IPVFIAMGVVGGVLGAVFNALNYWLTMFRIR), 410 to 432 (PCLQVIEAVLVAAVTATVAFVLI), 487 to 507 (PLTLGLFTLVYFFLACWTYGL), and 512 to 535 (GVFIPSLLIGAAWGRLFGISLSYL). The short motif at 512-516 (GVFIP) is the Selectivity filter part_3 element. Chloride is bound at residue Phe-514. The segment at residues 545-559 (GKYALMGAAAQLGGI) is an intramembrane region (helical). Residues 560–562 (VRM) constitute an intramembrane region (note=Loop between two helices). Residues 563–574 (TLSLTVIMMEAT) constitute an intramembrane region (helical). Residues 575–578 (SNVT) constitute an intramembrane region (note=Loop between two helices). The helical transmembrane segment at 579 to 597 (YGFPIMLVLMTAKIVGDVF) threads the bilayer. The Cytoplasmic segment spans residues 598–805 (IEGLYDMHIQ…GLEELSLAQT (208 aa)). Tyr-602 is a binding site for chloride. CBS domains lie at 631–695 (MSTP…VFVE) and 741–799 (MNPS…GLEE). ATP is bound by residues 658-660 (HNG) and 783-786 (TRKD). Phosphoserine is present on Ser-801.

The protein belongs to the chloride channel (TC 2.A.49) family. ClC-7/CLCN7 subfamily. Chloride channel 7 are heteromers of alpha (CLCN7) and beta (OSTM1) subunits. Brain and kidney.

Its subcellular location is the lysosome membrane. It catalyses the reaction 2 chloride(in) + H(+)(out) = 2 chloride(out) + H(+)(in). Functionally, slowly voltage-gated channel mediating the exchange of chloride ions against protons. Functions as antiporter and contributes to the acidification of the lysosome lumen and may be involved in maintaining lysosomal pH. The CLC channel family contains both chloride channels and proton-coupled anion transporters that exchange chloride or another anion for protons. The presence of conserved gating glutamate residues is typical for family members that function as antiporters. The polypeptide is H(+)/Cl(-) exchange transporter 7 (Homo sapiens (Human)).